Consider the following 1513-residue polypeptide: MGGKHQGSGAGASSGGGSLNSSLCNSVMTNATTASSSLTQQQQQLQAKYIKSKRHQSRYTSLQHSGHDSGSYLHLNSLWSIWYGVMLTLFQGYLAMHGAYRFLGCSLIPWKIEPVAELNLQIVLSGVVFILLPVFFTSAVFKVGNLANDGIKLATGARERRCTLSPHDGLEEESRGGTLRALWTHGGPTAAFVHIVIALCLLLPRLLLEARIIENGLLPKEQIWATELDFVVINRRNLMAMSVVGATPFPRHHQPSNQQQSHHQHGRLNLTANSLEQDEEDYFNDTMFTAIRGVPAGGNNNLFDLRPDRMANGRKAAKTTATTRTTTTANKLDAGKGQYFEVPDLINQDIDEEERQELEEAIRGEEDDGDEGVGVGEEGTVIMPDFDELAPRTAVGTSTTTAKASSDADKLNVENWQQLGTLGKADASSSSSSTTSTTTTTTTSTTTTAATTTSTRGTSTTTTTTTIKPMEITTSRQSAHHHHGKSRKHHKHHNKQRQQQPPRRHHVASHEQAILESFPEEETTTRDSSIHRVRPEVLPELPIPSTPVSASNSKIIAIKAKNQKRRISKRAAGVEIEPEYLLGDANINSSEFVAKSNEEEPEESEDFELEDGDFQAVPALTPAPPAEPNGPKSGQDYVRLDGFAGMLQLFFGIDKPIDVAIFSQPPSAEFVNLLCALLVWSVRYPAVFWNTSKAFACVFSLQMVVAALDIILGYVGISNLYKLQIYAEAMPVHQPGLILNAVVTLALYLLSTALVLASSMVMYLYGHGRLATRMRDRSIITLKTHQTWIYFAHCASLCFVLALAVVKAPLLNDLSATYKNNLHCPTFLAALVGVTHLLLWIVIWLCLTIKRRWHFKLPPLDSTYGGLLGKSSAQPLLMSSGQRTGSNSSSSGCNSTSTTVNGGDSKPDMMSTATSTELGMGMGMGIGGGINGGMGGTGMGLAAQEDIYWPKLTPSSPKLKVTFNEVTSTSDDVLLIGDQEQTDGKRHTSRGASVCFASATGEVDDGEYATLRAATAGAVVGITMGSMKRGLSNTSVGVSLLHLSEYDELPPPPPANLHHQQQQQQQQQQRQAHSFAHGHPHDYANLSGLGGISDDNISEEGKLLACVRDDSITYASTSDLEPPQPSAQAPPPPPPLPIKGAPVPQPPAVMPHSAGIYGRAPQAMPEMMQLSPEHHHNPLQHSLQHPQHHPLQQQQQKQQTPQHPLQQQGNPHQHLVSPLAPVTVAVHTNEAHIASSSTPRCLRRADSGVPNEALTPRSDTTSTTESTNTTSPPERAPSESSSGVHSGEERELEVIIRPRANSKPPPRPPQPPIQEEPYGRCTNMRMSSFNADPAATSSAVINSATLPPQRSVPEQKFDYTAHCSTMPLPVGCHSQQLAGSGNGYASTSAMTSSMGGGGMPPLPPSQVSSFMTPNSMHYANASVALGNVSGQQQPHTTLPNGVRYSNPHFLRRLPHVTKAAESPYGHLGYGAGHHAFAKLPHETHPTIPEDRDSANYSMASDQDCGLYVTAQLH.

The Cytoplasmic segment spans residues 1-77; the sequence is MGGKHQGSGA…DSGSYLHLNS (77 aa). A helical membrane pass occupies residues 78–98; that stretch reads LWSIWYGVMLTLFQGYLAMHG. Topologically, residues 99 to 120 are extracellular; that stretch reads AYRFLGCSLIPWKIEPVAELNL. A helical transmembrane segment spans residues 121 to 141; the sequence is QIVLSGVVFILLPVFFTSAVF. Residues 142 to 181 are Cytoplasmic-facing; the sequence is KVGNLANDGIKLATGARERRCTLSPHDGLEEESRGGTLRA. A helical membrane pass occupies residues 182-202; the sequence is LWTHGGPTAAFVHIVIALCLL. Topologically, residues 203–668 are extracellular; the sequence is LPRLLLEARI…VAIFSQPPSA (466 aa). Disordered regions lie at residues 247–266, 354–373, and 383–532; these read TPFP…HQHG, ERQE…DEGV, and MPDF…SIHR. Over residues 427–466 the composition is skewed to low complexity; sequence ASSSSSSTTSTTTTTTTSTTTTAATTTSTRGTSTTTTTTT. The segment covering 478 to 507 has biased composition (basic residues); sequence SAHHHHGKSRKHHKHHNKQRQQQPPRRHHV. Basic and acidic residues predominate over residues 523–532; sequence TTTRDSSIHR. The chain crosses the membrane as a helical span at residues 669-689; the sequence is EFVNLLCALLVWSVRYPAVFW. Over 690–696 the chain is Cytoplasmic; it reads NTSKAFA. The chain crosses the membrane as a helical span at residues 697–717; sequence CVFSLQMVVAALDIILGYVGI. Residues 718 to 736 lie on the Extracellular side of the membrane; it reads SNLYKLQIYAEAMPVHQPG. The chain crosses the membrane as a helical span at residues 737 to 757; it reads LILNAVVTLALYLLSTALVLA. Topologically, residues 758–787 are cytoplasmic; it reads SSMVMYLYGHGRLATRMRDRSIITLKTHQT. Residues 788–808 form a helical membrane-spanning segment; that stretch reads WIYFAHCASLCFVLALAVVKA. Residues 809 to 826 lie on the Extracellular side of the membrane; it reads PLLNDLSATYKNNLHCPT. The chain crosses the membrane as a helical span at residues 827–847; that stretch reads FLAALVGVTHLLLWIVIWLCL. The Cytoplasmic segment spans residues 848–1513; it reads TIKRRWHFKL…CGLYVTAQLH (666 aa). 2 stretches are compositionally biased toward low complexity: residues 879 to 903 and 1060 to 1071; these read SSGQ…VNGG and QQQQQQQQQQRQ. 5 disordered regions span residues 879–913, 1045–1090, 1115–1155, 1173–1214, and 1231–1335; these read SSGQ…MSTA, EYDE…SGLG, ASTS…HSAG, EHHH…PHQH, and AHIA…DPAA. A compositionally biased stretch (pro residues) spans 1122–1149; it reads PPQPSAQAPPPPPPLPIKGAPVPQPPAV. Composition is skewed to low complexity over residues 1179–1208 and 1255–1285; these read LQHS…LQQQ and TPRS…SGVH. Basic and acidic residues predominate over residues 1286 to 1296; it reads SGEERELEVII. Residues 1303–1314 show a composition bias toward pro residues; that stretch reads KPPPRPPQPPIQ. Positions 1324 to 1335 are enriched in polar residues; the sequence is MRMSSFNADPAA.

As to expression, expression varies in tissues throughout development. At stage 5, expressed in the embryo dorsal region followed by expression in a striped pattern at stage 6. During gastrulation, expressed in ventral region and ventral nerve cord. Also detected in many neurons in the externa sensilla and chordotonal organ. At stage 16, expressed on the surface of the midgut. Additionally, expressed in a subset of cardioblasts (Tin+ subpopulation) during dorsal vessel formation. In third-instar larval tissues, expressed in the eye and antennal disks. In the antennal disks, expressed in the second antennal segments. In the eye disks, strongest expression found in the ocelli, and in the differentiating ommatidial cells. Also expressed in all cells within and in the vicinity of the morphogenetic furrow.

Its subcellular location is the membrane. Involved in eye morphogenesis. May be essential for the normal differentiation of ommatidial cells. The sequence is that of Protein tincar (tinc) from Drosophila melanogaster (Fruit fly).